The primary structure comprises 63 residues: Hyphancin-3D (63 aa).

The N-terminal stretch at 1–22 is a signal peptide; it reads MNFSRIIFLVFACFVALASVSA. Residues 23 to 26 constitute a propeptide, removed by a dipeptidylpeptidase; the sequence is APEP. Leu61 carries the post-translational modification Leucine amide.

This sequence belongs to the cecropin family.

The protein localises to the secreted. Functionally, has antibacterial activity. In Hyphantria cunea (Fall webworm moth), this protein is Hyphancin-3D.